The sequence spans 256 residues: Thiazole synthase (256 aa).

The active-site Schiff-base intermediate with DXP is Lys-91. 1-deoxy-D-xylulose 5-phosphate contacts are provided by residues Gly-152, 179-180 (AG), and 201-202 (NT).

Belongs to the ThiG family. As to quaternary structure, homotetramer. Forms heterodimers with either ThiH or ThiS.

It is found in the cytoplasm. It carries out the reaction [ThiS sulfur-carrier protein]-C-terminal-Gly-aminoethanethioate + 2-iminoacetate + 1-deoxy-D-xylulose 5-phosphate = [ThiS sulfur-carrier protein]-C-terminal Gly-Gly + 2-[(2R,5Z)-2-carboxy-4-methylthiazol-5(2H)-ylidene]ethyl phosphate + 2 H2O + H(+). It functions in the pathway cofactor biosynthesis; thiamine diphosphate biosynthesis. In terms of biological role, catalyzes the rearrangement of 1-deoxy-D-xylulose 5-phosphate (DXP) to produce the thiazole phosphate moiety of thiamine. Sulfur is provided by the thiocarboxylate moiety of the carrier protein ThiS. In vitro, sulfur can be provided by H(2)S. The sequence is that of Thiazole synthase from Erwinia tasmaniensis (strain DSM 17950 / CFBP 7177 / CIP 109463 / NCPPB 4357 / Et1/99).